Consider the following 156-residue polypeptide: Ribonuclease H (156 aa).

Positions 2–144 (SQFDVTVFTD…CDVLARAQAS (143 aa)) constitute an RNase H type-1 domain. Asp-11, Glu-49, Asp-71, and Asp-136 together coordinate Mg(2+).

The protein belongs to the RNase H family. Monomer. It depends on Mg(2+) as a cofactor.

It is found in the cytoplasm. It catalyses the reaction Endonucleolytic cleavage to 5'-phosphomonoester.. In terms of biological role, endonuclease that specifically degrades the RNA of RNA-DNA hybrids. The sequence is that of Ribonuclease H from Nitratidesulfovibrio vulgaris (strain ATCC 29579 / DSM 644 / CCUG 34227 / NCIMB 8303 / VKM B-1760 / Hildenborough) (Desulfovibrio vulgaris).